Consider the following 279-residue polypeptide: Large ribosomal subunit protein uL2 (279 aa).

The tract at residues 223–279 (PVAMNPVDHPMGGGEGRASGGHPRSRKGLPAKGFKTRSRTKASNKYIVERRKTRKKK) is disordered. Positions 245–264 (PRSRKGLPAKGFKTRSRTKA) are enriched in basic residues.

Belongs to the universal ribosomal protein uL2 family. As to quaternary structure, part of the 50S ribosomal subunit. Forms a bridge to the 30S subunit in the 70S ribosome.

Functionally, one of the primary rRNA binding proteins. Required for association of the 30S and 50S subunits to form the 70S ribosome, for tRNA binding and peptide bond formation. It has been suggested to have peptidyltransferase activity; this is somewhat controversial. Makes several contacts with the 16S rRNA in the 70S ribosome. This is Large ribosomal subunit protein uL2 from Christiangramia forsetii (strain DSM 17595 / CGMCC 1.15422 / KT0803) (Gramella forsetii).